A 57-amino-acid polypeptide reads, in one-letter code: Large ribosomal subunit protein bL33 (57 aa).

The protein belongs to the bacterial ribosomal protein bL33 family.

This chain is Large ribosomal subunit protein bL33, found in Shewanella sp. (strain W3-18-1).